Reading from the N-terminus, the 198-residue chain is Large ribosomal subunit protein bL25 (198 aa).

This sequence belongs to the bacterial ribosomal protein bL25 family. CTC subfamily. As to quaternary structure, part of the 50S ribosomal subunit; part of the 5S rRNA/L5/L18/L25 subcomplex. Contacts the 5S rRNA. Binds to the 5S rRNA independently of L5 and L18.

Functionally, this is one of the proteins that binds to the 5S RNA in the ribosome where it forms part of the central protuberance. The protein is Large ribosomal subunit protein bL25 of Gloeothece citriformis (strain PCC 7424) (Cyanothece sp. (strain PCC 7424)).